The sequence spans 123 residues: Small ribosomal subunit protein uS12 (123 aa).

At D89 the chain carries 3-methylthioaspartic acid.

The protein belongs to the universal ribosomal protein uS12 family. Part of the 30S ribosomal subunit. Contacts proteins S8 and S17. May interact with IF1 in the 30S initiation complex.

In terms of biological role, with S4 and S5 plays an important role in translational accuracy. Interacts with and stabilizes bases of the 16S rRNA that are involved in tRNA selection in the A site and with the mRNA backbone. Located at the interface of the 30S and 50S subunits, it traverses the body of the 30S subunit contacting proteins on the other side and probably holding the rRNA structure together. The combined cluster of proteins S8, S12 and S17 appears to hold together the shoulder and platform of the 30S subunit. The sequence is that of Small ribosomal subunit protein uS12 from Trichlorobacter lovleyi (strain ATCC BAA-1151 / DSM 17278 / SZ) (Geobacter lovleyi).